The chain runs to 190 residues: MTNEEELVVLADEEGNAIGTAPKATVHTTDTPLHFAFSSYILNPRGELLVTRRALSKKTWPGVWTNSMCGHPAPDETNADAIRRRGVSELGLDFGSFLDIQVVLDDYRYRAEDSSGIVEWEICPVHLVRLAVGEFVEPLPDEVEEFAWEEPQKVFDAVDATPFVFSPWMVDQLSHPELRQAILEAFDPEA.

Residues His27 and His34 each coordinate Mn(2+). The Nudix hydrolase domain occupies 32-171; that stretch reads PLHFAFSSYI…PFVFSPWMVD (140 aa). The active site involves Cys69. Mg(2+) is bound at residue Cys69. His71 contacts Mn(2+). Position 89 (Glu89) interacts with Mg(2+). Mn(2+) contacts are provided by Glu119 and Glu121. Glu121 is a catalytic residue.

The protein belongs to the IPP isomerase type 1 family. The cofactor is Mg(2+). It depends on Mn(2+) as a cofactor.

Its subcellular location is the cytoplasm. It carries out the reaction isopentenyl diphosphate = dimethylallyl diphosphate. The protein operates within isoprenoid biosynthesis; dimethylallyl diphosphate biosynthesis; dimethylallyl diphosphate from isopentenyl diphosphate: step 1/1. In terms of biological role, catalyzes the 1,3-allylic rearrangement of the homoallylic substrate isopentenyl (IPP) to its highly electrophilic allylic isomer, dimethylallyl diphosphate (DMAPP). The protein is Isopentenyl-diphosphate Delta-isomerase of Corynebacterium efficiens (strain DSM 44549 / YS-314 / AJ 12310 / JCM 11189 / NBRC 100395).